Here is a 166-residue protein sequence, read N- to C-terminus: Ribosome maturation factor RimM (166 aa).

Positions Glu-90–Leu-163 constitute a PRC barrel domain.

The protein belongs to the RimM family. As to quaternary structure, binds ribosomal protein uS19.

It localises to the cytoplasm. Its function is as follows. An accessory protein needed during the final step in the assembly of 30S ribosomal subunit, possibly for assembly of the head region. Essential for efficient processing of 16S rRNA. May be needed both before and after RbfA during the maturation of 16S rRNA. It has affinity for free ribosomal 30S subunits but not for 70S ribosomes. The sequence is that of Ribosome maturation factor RimM from Oenococcus oeni (strain ATCC BAA-331 / PSU-1).